The primary structure comprises 246 residues: Small ribosomal subunit protein uS2 (246 aa).

It belongs to the universal ribosomal protein uS2 family.

The protein is Small ribosomal subunit protein uS2 of Azotobacter vinelandii (strain DJ / ATCC BAA-1303).